The following is a 175-amino-acid chain: Calcineurin subunit B (175 aa).

4 consecutive EF-hand domains span residues 21-56 (PELM…ANNP), 60-88 (RMIA…FSSK), 90-125 (GRDE…MVGN), and 131-166 (QLQQ…TDIV). Ca(2+) is bound by residues Asp-34, Asp-36, Ser-38, Ser-40, Glu-45, Asp-66, Asp-68, Ser-70, Thr-72, Glu-77, Asp-103, Asp-105, Asp-107, Tyr-109, Glu-114, Asp-144, Asp-146, Asp-148, Lys-150, and Glu-155.

This sequence belongs to the calcineurin regulatory subunit family. As to quaternary structure, composed of a catalytic subunit (A) and a regulatory subunit (B).

Its function is as follows. Regulatory subunit of calcineurin, a calcium-dependent, calmodulin stimulated protein phosphatase. Confers calcium sensitivity. Plays a central role in virulence and antifungal drug action. The polypeptide is Calcineurin subunit B (CNB1) (Cryptococcus neoformans var. neoformans serotype D (strain B-3501A) (Filobasidiella neoformans)).